The following is a 58-amino-acid chain: Large ribosomal subunit protein bL32 (58 aa).

The protein belongs to the bacterial ribosomal protein bL32 family.

This is Large ribosomal subunit protein bL32 from Caldicellulosiruptor bescii (strain ATCC BAA-1888 / DSM 6725 / KCTC 15123 / Z-1320) (Anaerocellum thermophilum).